The following is a 559-amino-acid chain: S-layer protein (559 aa).

A signal peptide spans 1 to 28; the sequence is MAMSLKKIGAIAVGGAMVASALASGVMA. Asn-108, Asn-130, Asn-155, Asn-222, and Asn-373 each carry an N-linked (GlcNAc...) asparagine glycan.

This sequence belongs to the Mj S-layer protein family.

The protein resides in the secreted. It localises to the cell wall. Its subcellular location is the S-layer. Its function is as follows. S-layer protein. The S-layer is a paracrystalline mono-layered assembly of proteins which coat the surface of the cell. The protein is S-layer protein of Methanothermococcus thermolithotrophicus (Methanococcus thermolithotrophicus).